The chain runs to 276 residues: Diaminopimelate epimerase (276 aa).

Substrate is bound by residues Asn13, Gln46, and Asn66. Cys75 serves as the catalytic Proton donor. Residues Gly76–Asn77, Asn159, Asn192, and Glu210–Arg211 contribute to the substrate site. Residue Cys219 is the Proton acceptor of the active site. Position 220 to 221 (Gly220 to Thr221) interacts with substrate.

The protein belongs to the diaminopimelate epimerase family. As to quaternary structure, homodimer.

It is found in the cytoplasm. The catalysed reaction is (2S,6S)-2,6-diaminopimelate = meso-2,6-diaminopimelate. Its pathway is amino-acid biosynthesis; L-lysine biosynthesis via DAP pathway; DL-2,6-diaminopimelate from LL-2,6-diaminopimelate: step 1/1. In terms of biological role, catalyzes the stereoinversion of LL-2,6-diaminopimelate (L,L-DAP) to meso-diaminopimelate (meso-DAP), a precursor of L-lysine and an essential component of the bacterial peptidoglycan. The chain is Diaminopimelate epimerase from Pseudomonas aeruginosa (strain LESB58).